The sequence spans 180 residues: MNPAPNLILIGPMGAGKTCIGRRLAERFTLDFVDVDQAIVDAAGASIPTIFEHSGETGFRSHEREALARVLEGRGQLVSTGGGAVLDPDNRALIARRGFVVYLRVSVAEQLERLARDKGRPLLQRPDREQVLHDLAAHRDPLYRELADLILDTDPYTAADATAQLVVKLATQWQRQDLTA.

14–19 (GAGKTC) contacts ATP. Position 18 (Thr18) interacts with Mg(2+). Residues Asp36, Arg60, and Gly82 each contribute to the substrate site. ATP is bound at residue Arg120. Residue Arg139 participates in substrate binding.

It belongs to the shikimate kinase family. As to quaternary structure, monomer. Requires Mg(2+) as cofactor.

It is found in the cytoplasm. It carries out the reaction shikimate + ATP = 3-phosphoshikimate + ADP + H(+). It functions in the pathway metabolic intermediate biosynthesis; chorismate biosynthesis; chorismate from D-erythrose 4-phosphate and phosphoenolpyruvate: step 5/7. Functionally, catalyzes the specific phosphorylation of the 3-hydroxyl group of shikimic acid using ATP as a cosubstrate. This Stenotrophomonas maltophilia (strain R551-3) protein is Shikimate kinase.